We begin with the raw amino-acid sequence, 503 residues long: MAARLLSSVSLTDVVLLLSSVWIAVHLVLAAYNVYLHPLRRYPGPKLAAASQLLNVYHVLKGDNCKWTAQLHEKYGTVVRIGPNELSYISPSANQTIFGGRPKEDKVFEKNPVAYLQGNGDISNIFFARFHDHNRLRKLMAPAFSETAVREQEATIQGYTNQLIAALRNRSGQAAYPDAKGVVNIIPWLHFILFDVLTRLSFGDPIGCLDRADYHPWVSVIFKAIIHSTYTQAAHRLAPYQWILKHFIPNDMTANYEAHLEFTRKQLDQRQQVKEEPVARADFSSFMLKGMSPDELFDNVNIVITAGGETTASTISSSLYYLVHNPSSYERLTKEIRDTFSAEGEITLAAVAALPYLKAVIQEAMRIHPPVPIGLFRVAPAAGAFIDGQWVPGNTWVSVANLAASRSPTYWRDPERFTPERWLGDAKYESDVREASAPFSIGTRNCIGLNLANANMRIILARLLWNFDFEAQPDNIDPHELDEYGIWETKPLNLKIKERVQTT.

Residues 14 to 34 form a helical membrane-spanning segment; sequence VVLLLSSVWIAVHLVLAAYNV. N-linked (GlcNAc...) asparagine glycosylation is found at Asn-94 and Asn-169. Cys-446 contributes to the heme binding site.

Belongs to the cytochrome P450 family. Requires heme as cofactor.

The protein resides in the membrane. The protein operates within secondary metabolite biosynthesis. Its function is as follows. Cytochrome P450 monooxygenase; part of the lnb gene cluster that mediates the biosynthesis of diastereomeric piperazines. Lna and lnb clusters encode sets of enzymes that produce overlapping sets of previously undescribed metabolites such as piperazinomycin-like metabolites or morpholine. The lna and lnb biosynthetic pathways appear to be part of a signaling network that controls the formation of sclerotia, a resilient overwintering structure. One primary function of the non-canonical nonribosomal peptide synthetases lnaA and lnbA consists in the reduction of L-tyrosine. The presence in the clusters of tailoring enzymes such as the oxidoreductases lnaB, lnbB, lnaE or lnbE, as well as of the cytochrome P450 monooxygenases lnaC, lnaD, or lnbC, might explain formation of various diastereomeric piperazines. The polypeptide is Cytochrome P450 monooxygenase lnbC (Aspergillus flavus (strain ATCC 200026 / FGSC A1120 / IAM 13836 / NRRL 3357 / JCM 12722 / SRRC 167)).